A 284-amino-acid polypeptide reads, in one-letter code: L-ribulose-5-phosphate 3-epimerase UlaE (284 aa).

Belongs to the L-ribulose-5-phosphate 3-epimerase family.

The catalysed reaction is L-ribulose 5-phosphate = L-xylulose 5-phosphate. It participates in cofactor degradation; L-ascorbate degradation; D-xylulose 5-phosphate from L-ascorbate: step 3/4. Catalyzes the isomerization of L-xylulose-5-phosphate to L-ribulose-5-phosphate. Is involved in the anaerobic L-ascorbate utilization. This Salmonella typhi protein is L-ribulose-5-phosphate 3-epimerase UlaE.